A 178-amino-acid chain; its full sequence is Cytidylate kinase (178 aa).

7–15 serves as a coordination point for ATP; sequence GLPGTGTTT.

Belongs to the cytidylate kinase family. Type 2 subfamily.

Its subcellular location is the cytoplasm. The catalysed reaction is CMP + ATP = CDP + ADP. It catalyses the reaction dCMP + ATP = dCDP + ADP. This is Cytidylate kinase (cmk) from Methanocaldococcus jannaschii (strain ATCC 43067 / DSM 2661 / JAL-1 / JCM 10045 / NBRC 100440) (Methanococcus jannaschii).